The following is a 96-amino-acid chain: Co-chaperonin GroES (96 aa).

The protein belongs to the GroES chaperonin family. Heptamer of 7 subunits arranged in a ring. Interacts with the chaperonin GroEL.

Its subcellular location is the cytoplasm. In terms of biological role, together with the chaperonin GroEL, plays an essential role in assisting protein folding. The GroEL-GroES system forms a nano-cage that allows encapsulation of the non-native substrate proteins and provides a physical environment optimized to promote and accelerate protein folding. GroES binds to the apical surface of the GroEL ring, thereby capping the opening of the GroEL channel. This chain is Co-chaperonin GroES, found in Aliivibrio fischeri (strain ATCC 700601 / ES114) (Vibrio fischeri).